Here is a 435-residue protein sequence, read N- to C-terminus: AMSH-like protease sst2 (435 aa).

Positions 162–181 (TDLLSPDSQKLSKSSSDLPQ) are enriched in low complexity. A disordered region spans residues 162–185 (TDLLSPDSQKLSKSSSDLPQFDYP). A Phosphothreonine modification is found at threonine 192. One can recognise an MPN domain in the interval 262 to 392 (TIYLPKLLKK…FRLLDPEGLQ (131 aa)). Zn(2+)-binding residues include histidine 341, histidine 343, aspartate 354, histidine 356, cysteine 397, histidine 404, and histidine 406. Positions 341-354 (HTHPTQTCFMSSVD) match the JAMM motif motif.

It belongs to the peptidase M67C family. The cofactor is Zn(2+).

It is found in the cytoplasm. It localises to the endosome. In terms of biological role, zinc metalloprotease that specifically cleaves 'Lys-63'-linked polyubiquitin chains. Does not cleave 'Lys-48'-linked polyubiquitin chains. Plays a role in the multivesicular body (MVB) sorting pathway. Required for ubiquitin-dependent sorting of proteins into the endosome and subsequent trafficking to the vacuole. May regulate MVB sorting through deubiquitination of ubiquitinated ESCRT proteins. The chain is AMSH-like protease sst2 (sst2) from Schizosaccharomyces pombe (strain 972 / ATCC 24843) (Fission yeast).